A 256-amino-acid chain; its full sequence is Triosephosphate isomerase (256 aa).

Residue 9 to 11 coordinates substrate; sequence NWK. The Electrophile role is filled by His95. The active-site Proton acceptor is the Glu167. Residues Gly173, Ser212, and 233-234 contribute to the substrate site; that span reads GG.

The protein belongs to the triosephosphate isomerase family. As to quaternary structure, homodimer.

The protein resides in the cytoplasm. The catalysed reaction is D-glyceraldehyde 3-phosphate = dihydroxyacetone phosphate. It participates in carbohydrate biosynthesis; gluconeogenesis. The protein operates within carbohydrate degradation; glycolysis; D-glyceraldehyde 3-phosphate from glycerone phosphate: step 1/1. Its function is as follows. Involved in the gluconeogenesis. Catalyzes stereospecifically the conversion of dihydroxyacetone phosphate (DHAP) to D-glyceraldehyde-3-phosphate (G3P). The chain is Triosephosphate isomerase from Proteus mirabilis (strain HI4320).